The sequence spans 260 residues: 3'-5' ssDNA/RNA exonuclease TatD (260 aa).

A divalent metal cation-binding residues include glutamate 91, histidine 127, and histidine 152.

It belongs to the metallo-dependent hydrolases superfamily. TatD-type hydrolase family. TatD subfamily. In terms of assembly, monomer. Requires Mg(2+) as cofactor.

It is found in the cytoplasm. In terms of biological role, 3'-5' exonuclease that prefers single-stranded DNA and RNA. May play a role in the H(2)O(2)-induced DNA damage repair. The chain is 3'-5' ssDNA/RNA exonuclease TatD from Citrobacter koseri (strain ATCC BAA-895 / CDC 4225-83 / SGSC4696).